The following is a 122-amino-acid chain: Serum amyloid A-1 protein (122 aa).

Positions 1-18 (MKPFVAIIFCFLILGVDS) are cleaved as a signal peptide. An important for amyloid formation region spans residues 19-45 (QRWFQFMKEAGQGTRDMWRAYTDMREA). A disordered region spans residues 100–122 (ANEWGRSGKDPNFFRPPGLPSKY).

Belongs to the SAA family. As to quaternary structure, homohexamer; dimer of trimers. Can form amyloid fibrils after partial proteolysis; the native, undenatured protein does not form amyloid fibrils (in vitro). Apolipoprotein of the HDL complex. Binds to heparin. In terms of tissue distribution, detected in liver, spleen and kidney.

The protein localises to the secreted. Its function is as follows. Major acute phase protein. The polypeptide is Serum amyloid A-1 protein (SAA1) (Mesocricetus auratus (Golden hamster)).